Reading from the N-terminus, the 395-residue chain is Acetate kinase (395 aa).

A Mg(2+)-binding site is contributed by Asn8. Residue Lys15 coordinates ATP. Residue Arg89 participates in substrate binding. Asp146 serves as the catalytic Proton donor/acceptor. ATP is bound by residues 206-210 (HLGNG), 281-283 (DLR), and 329-333 (GIGEN). Residue Glu382 coordinates Mg(2+).

It belongs to the acetokinase family. As to quaternary structure, homodimer. Mg(2+) is required as a cofactor. Mn(2+) serves as cofactor.

The protein localises to the cytoplasm. The catalysed reaction is acetate + ATP = acetyl phosphate + ADP. The protein operates within metabolic intermediate biosynthesis; acetyl-CoA biosynthesis; acetyl-CoA from acetate: step 1/2. Its function is as follows. Catalyzes the formation of acetyl phosphate from acetate and ATP. Can also catalyze the reverse reaction. This Shouchella clausii (strain KSM-K16) (Alkalihalobacillus clausii) protein is Acetate kinase.